Reading from the N-terminus, the 683-residue chain is MALLMRLLTLALALSVGPAGTLAGPAKSPYQLVLQHSRLRGRQHGPNVCAVQKVIGTNKKYFTNCKQWYQRKICGKSTVISYECCPGYEKVPGEKGCPAALPLSNLYETMGVVGSTTTQLYTDRTEKLRPEMEGPGSFTIFAPSNEAWSSLPAEVLDSLVSNVNIELLNALRYHMVDRRVLTDELKHGMTLTSMYQNSNIQIHHYPNGIVTVNCARLLKADHHATNGVVHLIDKVISTITNNIQQIIEIEDTFETLRAAVAASGLNTVLEGDGQFTLLAPTNEAFEKIPAETLNRILGDPEALRDLLNNHILKSAMCAEAIVAGMSMETLGGTTLEVGCSGDKLTINGKAVISNKDILATNGVIHFIDELLIPDSAKTLLELAGESDVSTAIDILKQAGLDTHLSGKEQLTFLAPLNSVFKDGVPRIDAQMKTLLLNHMVKEQLASKYLYSGQTLDTLGGKKLRVFVYRNSLCIENSCIAAHDKRGRFGTLFTMDRMLTPPMGTVMDVLKGDNRFSMLVAAIQSAGLMEILNREGVYTVFAPTNEAFQAMPPEELNKLLANAKELTNILKYHIGDEILVSGGIGALVRLKSLQGDKLEVSSKNNVVSVNKEPVAETDIMATNGVVYAINTVLQPPANRPQERGDELADSALEIFKQASAYSRAAQRSVRLAPVYQRLLERMKH.

A signal peptide spans 1–23 (MALLMRLLTLALALSVGPAGTLA). S37 is modified (phosphoserine). The region spanning 45–99 (GPNVCAVQKVIGTNKKYFTNCKQWYQRKICGKSTVISYECCPGYEKVPGEKGCPA) is the EMI domain. Disulfide bonds link C49-C85, C74-C339, C84-C97, C214-C317, and C473-C478. The residue at position 65 (C65) is an S-cysteinyl cysteine. FAS1 domains are found at residues 103–236 (LSNL…DKVI), 240–371 (TNNI…DELL), 375–498 (SAKT…DRML), and 502–632 (MGTV…NTVL). Positions 642 to 644 (RGD) match the Cell attachment site motif.

Binds to type I, II, and IV collagens. In terms of processing, gamma-carboxylation is controversial. Gamma-carboxyglutamated; gamma-carboxyglutamate residues are formed by vitamin K dependent carboxylation; this may be required for calcium binding. According to a more recent report, does not contain vitamin K-dependent gamma-carboxyglutamate residues. Post-translationally, the EMI domain contains 2 expected intradomain disulfide bridges (Cys-49-Cys85 and Cys-84-Cys-97) and one unusual interdomain disulfide bridge to the second FAS1 domain (Cys-74-Cys-339). This arrangement violates the predicted disulfide bridge pattern of an EMI domain. In terms of tissue distribution, expressed in heart, kidney, liver, skeletal muscle, testis, thyroid and uterus.

It localises to the secreted. It is found in the extracellular space. The protein resides in the extracellular matrix. In terms of biological role, plays a role in cell adhesion. May play a role in cell-collagen interactions. The sequence is that of Transforming growth factor-beta-induced protein ig-h3 (Tgfbi) from Mus musculus (Mouse).